The following is a 92-amino-acid chain: U21-hexatoxin-Hi1a (92 aa).

Positions 1–19 (MKTILSMLIFVALFAAIVG) are cleaved as a signal peptide. Cystine bridges form between cysteine 41/cysteine 55, cysteine 48/cysteine 67, cysteine 54/cysteine 82, and cysteine 85/cysteine 92.

The protein belongs to the neurotoxin 21 family. Expressed by the venom gland.

Its subcellular location is the secreted. Potent insecticidal toxin with probable ion channel impairing activity. In vivo, reversibly paralyzes all flies within 30 minutes, even at low dose (0.3 nmol/g). The protein is U21-hexatoxin-Hi1a of Hadronyche infensa (Fraser island funnel-web spider).